We begin with the raw amino-acid sequence, 161 residues long: 2-C-methyl-D-erythritol 2,4-cyclodiphosphate synthase (161 aa).

Residues Asp-10 and His-12 each contribute to the a divalent metal cation site. 4-CDP-2-C-methyl-D-erythritol 2-phosphate is bound by residues 10-12 (DVH) and 36-37 (HS). His-44 serves as a coordination point for a divalent metal cation. Residues 58–60 (DIG), 63–67 (FPDTD), 102–108 (AQAPKMA), 134–137 (TTTE), Phe-141, and Arg-144 contribute to the 4-CDP-2-C-methyl-D-erythritol 2-phosphate site.

It belongs to the IspF family. In terms of assembly, homotrimer. Requires a divalent metal cation as cofactor.

It carries out the reaction 4-CDP-2-C-methyl-D-erythritol 2-phosphate = 2-C-methyl-D-erythritol 2,4-cyclic diphosphate + CMP. It participates in isoprenoid biosynthesis; isopentenyl diphosphate biosynthesis via DXP pathway; isopentenyl diphosphate from 1-deoxy-D-xylulose 5-phosphate: step 4/6. Involved in the biosynthesis of isopentenyl diphosphate (IPP) and dimethylallyl diphosphate (DMAPP), two major building blocks of isoprenoid compounds. Catalyzes the conversion of 4-diphosphocytidyl-2-C-methyl-D-erythritol 2-phosphate (CDP-ME2P) to 2-C-methyl-D-erythritol 2,4-cyclodiphosphate (ME-CPP) with a corresponding release of cytidine 5-monophosphate (CMP). This is 2-C-methyl-D-erythritol 2,4-cyclodiphosphate synthase from Shewanella baltica (strain OS155 / ATCC BAA-1091).